Here is a 478-residue protein sequence, read N- to C-terminus: tRNA-2-methylthio-N(6)-dimethylallyladenosine synthase (478 aa).

Residues 39–157 form the MTTase N-terminal domain; that stretch reads KLVFTQTFGC…FPQLLTESIN (119 aa). Residues C48, C84, C118, C194, C198, and C201 each coordinate [4Fe-4S] cluster. A Radical SAM core domain is found at 180-410; that stretch reads RKFELKAFVN…LEAVNRISAE (231 aa). Residues 410-477 enclose the TRAM domain; sequence EINDGYKDRI…TFSLNGILVN (68 aa).

Belongs to the methylthiotransferase family. MiaB subfamily. Monomer. Requires [4Fe-4S] cluster as cofactor.

The protein localises to the cytoplasm. It catalyses the reaction N(6)-dimethylallyladenosine(37) in tRNA + (sulfur carrier)-SH + AH2 + 2 S-adenosyl-L-methionine = 2-methylsulfanyl-N(6)-dimethylallyladenosine(37) in tRNA + (sulfur carrier)-H + 5'-deoxyadenosine + L-methionine + A + S-adenosyl-L-homocysteine + 2 H(+). In terms of biological role, catalyzes the methylthiolation of N6-(dimethylallyl)adenosine (i(6)A), leading to the formation of 2-methylthio-N6-(dimethylallyl)adenosine (ms(2)i(6)A) at position 37 in tRNAs that read codons beginning with uridine. This Clostridioides difficile (strain 630) (Peptoclostridium difficile) protein is tRNA-2-methylthio-N(6)-dimethylallyladenosine synthase.